The sequence spans 1824 residues: Treslin (1824 aa).

Disordered regions lie at residues 542–572 (EFYQSSTAGSSGSLRSKKRGTQCTPVRQKMK), 590–622 (AQKTQGDSGSAGSGKGTEKGGKKSSGDRTKPGL), 907–973 (SPSK…SGES), 1001–1035 (RHSSVFYSSSQPRSRNLDRVVSSSQLSHSEGKGKF), 1098–1117 (AVGCRTPQSPRTPNRTVGDN), 1189–1221 (VPENQVNVPDSPVFAKRHSPRLVTPGKNSSPEE), 1293–1388 (PFCN…DDDK), 1459–1518 (FEGK…QSSP), 1617–1650 (TPTHHPTSSQSPLASPLTPSPQSRGWPTPENLNS), and 1803–1824 (PLCQPRRRRTPSRTYSRKKLLD). Low complexity predominate over residues 546–555 (SSTAGSSGSL). Polar residues predominate over residues 562–572 (TQCTPVRQKMK). Residues 605-619 (GTEKGGKKSSGDRTK) are compositionally biased toward basic and acidic residues. A compositionally biased stretch (polar residues) spans 907–921 (SPSKKSKMPRSQSVS). Positions 932–952 (SDVDNDDRHTLLTKKVSETPL) are enriched in basic and acidic residues. 2 stretches are compositionally biased toward polar residues: residues 1005-1014 (VFYSSSQPRS) and 1103-1114 (TPQSPRTPNRTV). Polar residues predominate over residues 1319–1345 (RSGNTPVKESCSPSSNSQGITGTSPSP). The segment covering 1347–1370 (KSLSSAVAKSSPSPSFGPSRSGVG) has biased composition (low complexity). Residues 1462 to 1472 (KQTTSTGTPLT) are compositionally biased toward polar residues. Basic and acidic residues predominate over residues 1480–1490 (TPDRRQREAEA). 2 stretches are compositionally biased toward polar residues: residues 1617–1629 (TPTHHPTSSQSPL) and 1636–1650 (SPQSRGWPTPENLNS). Positions 1807-1824 (PRRRRTPSRTYSRKKLLD) are enriched in basic residues.

This sequence belongs to the treslin family. In terms of assembly, interacts with topbp1 (via BRCT domains); interaction takes place in a cdk2-dependent manner. Component of the replisome complex.

Its subcellular location is the nucleus. Regulator of DNA replication and S/M and G2/M checkpoints. Regulates the triggering of DNA replication initiation via its interaction with topbp1 by participating in cdk2-mediated loading of cdc45l onto replication origins. Required for the transition from pre-replication complex (pre-RC) to pre-initiation complex (pre-IC). Required to prevent mitotic entry after treatment with ionizing radiation. This chain is Treslin (ticrr), found in Danio rerio (Zebrafish).